We begin with the raw amino-acid sequence, 419 residues long: Maltoporin 2 (419 aa).

An N-terminal signal peptide occupies residues Met-1–Ala-23.

Belongs to the porin LamB (TC 1.B.3) family. In terms of assembly, homotrimer formed of three 18-stranded antiparallel beta-barrels, containing three independent channels.

The protein resides in the cell outer membrane. The enzyme catalyses beta-maltose(in) = beta-maltose(out). In terms of biological role, involved in the transport of maltose and maltodextrins. The polypeptide is Maltoporin 2 (Yersinia pestis bv. Antiqua (strain Antiqua)).